Consider the following 271-residue polypeptide: Protein-L-isoaspartate O-methyltransferase (271 aa).

Pro residues predominate over residues 1–15 (MRKPVTPPGNPPRPR). Positions 1-60 (MRKPVTPPGNPPRPRSPGYGSTSLAPGITAANSNTRISPPTLARPAPAAGAGGQGGNLGL) are disordered. Residues 39–49 (PPTLARPAPAA) are compositionally biased toward low complexity. Ser-119 is a catalytic residue.

Belongs to the methyltransferase superfamily. L-isoaspartyl/D-aspartyl protein methyltransferase family.

It localises to the cytoplasm. The catalysed reaction is [protein]-L-isoaspartate + S-adenosyl-L-methionine = [protein]-L-isoaspartate alpha-methyl ester + S-adenosyl-L-homocysteine. Its function is as follows. Catalyzes the methyl esterification of L-isoaspartyl residues in peptides and proteins that result from spontaneous decomposition of normal L-aspartyl and L-asparaginyl residues. It plays a role in the repair and/or degradation of damaged proteins. The chain is Protein-L-isoaspartate O-methyltransferase from Bordetella petrii (strain ATCC BAA-461 / DSM 12804 / CCUG 43448).